The chain runs to 301 residues: Negative regulator of the PHO system (301 aa).

Residues 7-297 (FKQLERLGNG…AQQALSHPLF (291 aa)) form the Protein kinase domain. Residues 13–21 (LGNGTYATV) and lysine 36 contribute to the ATP site. Aspartate 133 serves as the catalytic Proton acceptor.

This sequence belongs to the protein kinase superfamily. CMGC Ser/Thr protein kinase family. CDC2/CDKX subfamily. Interacts with a number of cyclins.

It carries out the reaction L-seryl-[protein] + ATP = O-phospho-L-seryl-[protein] + ADP + H(+). It catalyses the reaction L-threonyl-[protein] + ATP = O-phospho-L-threonyl-[protein] + ADP + H(+). In terms of biological role, when phosphate concentrations are high it phosphorylates the PHO4 transcription factor thus establishing repression. The chain is Negative regulator of the PHO system (PHO85) from Eremothecium gossypii (strain ATCC 10895 / CBS 109.51 / FGSC 9923 / NRRL Y-1056) (Yeast).